Here is a 703-residue protein sequence, read N- to C-terminus: MAQKHPGERGLCGVHHSGGSSLITSGSSVDPEILSFSGLRDSKETAPNGTRCLKEHSDPKCTQPPNPAHWSDPSHGPPRGPGPPREGGYPDESETCSEESGVDQELSRENETGYQEDGSPSFLPIPSACNCQGSPGVPEGTCSEEGDGSSSSFCHHCTSPALGEDEELEEEYDDEEPLKFPSDFSRVSSGKKPPSRRQRHRFLTKEDVRDSGRRDPKAPGRHRLARKRSQTDKRRGLGLWGVEELCQLGQAGFWWLIELLVLVGEYVETCGYLIYACRKLKGSDLDLFRIWVGVWARRLGGWARVMFQFLSQSFFSVAGLFIRLLRVVGAFLLLALALFLGCLQLGWRFLVGLGDRLGWRGKAAWLFSWLDSPALHHFLTLLKDSRPWQQLVRVIQWGWLELPWVKQRTQRQGTAHVASGRYCQPEEEVARLLTMAGVPEDELNPFHVLGVEATASDIELKKAYRQLAVMVHPDKNHHPRAEEAFKVLRAAWDIVSNPERRKEYEMKRMAENELSRSVNEFLSKLQDDLKEAMNTMMCSRCQGKHRRFEMDREPKSARYCAECNRLHPAEEGDFWAESSMLGLKITYFALMDGKVYDITEWAGCQRVGISPDTHRVPYHISFGSRVPGTSGRQRATPESPPADLQDFLSRIFQVPPGPMSNGNFFAAPHPGPGTTSTSRPNSSVPKGEAKPKRRKKVRRPFQR.

Disordered stretches follow at residues methionine 1–serine 150 and glutamate 164–serine 229. The span at serine 17 to serine 28 shows a compositional bias: low complexity. The segment covering histidine 75 to proline 84 has biased composition (pro residues). Composition is skewed to acidic residues over residues tyrosine 89–valine 102 and glutamate 164–glutamate 176. A compositionally biased stretch (basic residues) spans proline 193 to phenylalanine 202. Basic and acidic residues predominate over residues leucine 203–alanine 218. The span at proline 219–arginine 228 shows a compositional bias: basic residues. The next 3 helical transmembrane spans lie at tryptophan 254 to isoleucine 274, valine 305 to leucine 325, and valine 327 to tryptophan 347. The J domain maps to asparagine 444–arginine 508. 2 disordered regions span residues phenylalanine 622–aspartate 643 and methionine 659–arginine 703. The span at glycine 673 to valine 684 shows a compositional bias: polar residues. Basic residues predominate over residues proline 691–arginine 703.

Interacts with the FxxxFxxxF motif of DRD1 via its C-terminal domain. Detected in heart, brain, lung, liver, skeletal muscle, kidney and testis.

It is found in the endoplasmic reticulum membrane. Its function is as follows. Regulates the export of target proteins, such as DRD1, from the endoplasmic reticulum to the cell surface. This Rattus norvegicus (Rat) protein is DnaJ homolog subfamily C member 14 (Dnajc14).